Here is a 348-residue protein sequence, read N- to C-terminus: tRNA pseudouridine synthase D (348 aa).

Catalysis depends on Asp84, which acts as the Nucleophile. Positions 162 to 308 (GVPNYFGPQR…ARMDRRPLCL (147 aa)) constitute a TRUD domain.

It belongs to the pseudouridine synthase TruD family.

The enzyme catalyses uridine(13) in tRNA = pseudouridine(13) in tRNA. Responsible for synthesis of pseudouridine from uracil-13 in transfer RNAs. This chain is tRNA pseudouridine synthase D, found in Chromohalobacter salexigens (strain ATCC BAA-138 / DSM 3043 / CIP 106854 / NCIMB 13768 / 1H11).